The primary structure comprises 205 residues: GTP cyclohydrolase-2 (205 aa).

Residue 49-53 (RIHSE) coordinates GTP. Zn(2+) is bound by residues Cys-54, Cys-65, and Cys-67. Residues Gln-70, 92 to 94 (EGR), and Thr-114 each bind GTP. Residue Asp-126 is the Proton acceptor of the active site. Arg-128 functions as the Nucleophile in the catalytic mechanism. Residues Thr-149 and Lys-154 each coordinate GTP.

This sequence belongs to the GTP cyclohydrolase II family. Requires Zn(2+) as cofactor.

It catalyses the reaction GTP + 4 H2O = 2,5-diamino-6-hydroxy-4-(5-phosphoribosylamino)-pyrimidine + formate + 2 phosphate + 3 H(+). It functions in the pathway cofactor biosynthesis; riboflavin biosynthesis; 5-amino-6-(D-ribitylamino)uracil from GTP: step 1/4. In terms of biological role, catalyzes the conversion of GTP to 2,5-diamino-6-ribosylamino-4(3H)-pyrimidinone 5'-phosphate (DARP), formate and pyrophosphate. This chain is GTP cyclohydrolase-2, found in Shewanella denitrificans (strain OS217 / ATCC BAA-1090 / DSM 15013).